The chain runs to 437 residues: tRNA-2-methylthio-N(6)-dimethylallyladenosine synthase (437 aa).

An MTTase N-terminal domain is found at 3–120 (RKLFIETHGC…LPEMIDAART (118 aa)). Cys12, Cys49, Cys83, Cys157, Cys161, and Cys164 together coordinate [4Fe-4S] cluster. The Radical SAM core domain maps to 143-370 (RVDGPSAYVS…QQRINQQGFE (228 aa)). The TRAM domain occupies 373–437 (RRMVGTTQRI…PHSLRGSLLS (65 aa)).

This sequence belongs to the methylthiotransferase family. MiaB subfamily. As to quaternary structure, monomer. [4Fe-4S] cluster serves as cofactor.

The protein localises to the cytoplasm. The enzyme catalyses N(6)-dimethylallyladenosine(37) in tRNA + (sulfur carrier)-SH + AH2 + 2 S-adenosyl-L-methionine = 2-methylsulfanyl-N(6)-dimethylallyladenosine(37) in tRNA + (sulfur carrier)-H + 5'-deoxyadenosine + L-methionine + A + S-adenosyl-L-homocysteine + 2 H(+). In terms of biological role, catalyzes the methylthiolation of N6-(dimethylallyl)adenosine (i(6)A), leading to the formation of 2-methylthio-N6-(dimethylallyl)adenosine (ms(2)i(6)A) at position 37 in tRNAs that read codons beginning with uridine. The polypeptide is tRNA-2-methylthio-N(6)-dimethylallyladenosine synthase (Stutzerimonas stutzeri (strain A1501) (Pseudomonas stutzeri)).